We begin with the raw amino-acid sequence, 338 residues long: 5-dehydro-2-deoxygluconokinase (338 aa).

Belongs to the carbohydrate kinase PfkB family.

It carries out the reaction 5-dehydro-2-deoxy-D-gluconate + ATP = 6-phospho-5-dehydro-2-deoxy-D-gluconate + ADP + H(+). It participates in polyol metabolism; myo-inositol degradation into acetyl-CoA; acetyl-CoA from myo-inositol: step 5/7. In terms of biological role, catalyzes the phosphorylation of 5-dehydro-2-deoxy-D-gluconate (2-deoxy-5-keto-D-gluconate or DKG) to 6-phospho-5-dehydro-2-deoxy-D-gluconate (DKGP). The polypeptide is 5-dehydro-2-deoxygluconokinase (Mesomycoplasma hyopneumoniae (strain J / ATCC 25934 / NCTC 10110) (Mycoplasma hyopneumoniae)).